A 564-amino-acid chain; its full sequence is Proline--tRNA ligase (564 aa).

This sequence belongs to the class-II aminoacyl-tRNA synthetase family. ProS type 1 subfamily. In terms of assembly, homodimer.

The protein localises to the cytoplasm. The enzyme catalyses tRNA(Pro) + L-proline + ATP = L-prolyl-tRNA(Pro) + AMP + diphosphate. In terms of biological role, catalyzes the attachment of proline to tRNA(Pro) in a two-step reaction: proline is first activated by ATP to form Pro-AMP and then transferred to the acceptor end of tRNA(Pro). As ProRS can inadvertently accommodate and process non-cognate amino acids such as alanine and cysteine, to avoid such errors it has two additional distinct editing activities against alanine. One activity is designated as 'pretransfer' editing and involves the tRNA(Pro)-independent hydrolysis of activated Ala-AMP. The other activity is designated 'posttransfer' editing and involves deacylation of mischarged Ala-tRNA(Pro). The misacylated Cys-tRNA(Pro) is not edited by ProRS. The chain is Proline--tRNA ligase from Bacillus subtilis (strain 168).